A 497-amino-acid chain; its full sequence is G protein-coupled receptor gprM (497 aa).

N-linked (GlcNAc...) asparagine glycosylation occurs at N3. A run of 5 helical transmembrane segments spans residues 66-86 (ISVA…VLPV), 98-118 (FTLG…PLGV), 138-158 (CAFT…WSFL), 179-199 (WGAL…MLIL), and 221-241 (YWIP…ATMA). The N-linked (GlcNAc...) asparagine glycan is linked to N259. 2 consecutive transmembrane segments (helical) span residues 293–313 (VTLV…FIEL) and 357–377 (LLLA…ILFA). N421 carries an N-linked (GlcNAc...) asparagine glycan. The segment at 428 to 497 (YKSPSPMVRS…APAVYREYDD (70 aa)) is disordered.

This sequence belongs to the G-protein coupled receptor GPR1/git3 family. As to quaternary structure, interacts with gpaA.

The protein localises to the cell membrane. G protein-coupled receptor that plays a role in conidiation and regulation of the biosynthesis of secondary metabolites such as dihydroxynaphthalene (DHN)-melanin, via interaction with the G-protein complex alpha subunit gpaA. This chain is G protein-coupled receptor gprM, found in Aspergillus fumigatus (strain CBS 144.89 / FGSC A1163 / CEA10) (Neosartorya fumigata).